The following is a 96-amino-acid chain: Small ribosomal subunit protein bS6 (96 aa).

This sequence belongs to the bacterial ribosomal protein bS6 family.

Functionally, binds together with bS18 to 16S ribosomal RNA. This Salinispora arenicola (strain CNS-205) protein is Small ribosomal subunit protein bS6.